A 470-amino-acid chain; its full sequence is Macrophage metalloelastase (470 aa).

An N-terminal signal peptide occupies residues 1–16; sequence MKFLLILLLQATASGA. Residues 17 to 105 constitute a propeptide, activation peptide; that stretch reads LPLNSSTSLE…DVHHFREMPG (89 aa). An N-linked (GlcNAc...) asparagine glycan is attached at Asn-20. Positions 90–97 match the Cysteine switch motif; the sequence is PRCGVPDV. Cys-92 contacts Zn(2+). Ca(2+) contacts are provided by Asp-124 and Asp-158. Zn(2+) is bound by residues His-168 and Asp-170. Ca(2+)-binding residues include Asp-175, Gly-176, Gly-178, and Ile-180. His-183 is a binding site for Zn(2+). Ca(2+) is bound by residues Gly-190, Gly-192, and Asp-194. A Zn(2+)-binding site is contributed by His-196. 3 residues coordinate Ca(2+): Asp-198, Glu-199, and Glu-201. His-218 provides a ligand contact to Zn(2+). Glu-219 is an active-site residue. Positions 222 and 228 each coordinate Zn(2+). Hemopexin repeat units lie at residues 279 to 328, 329 to 375, 377 to 425, and 426 to 470; these read PALC…WPTL, PSGI…GFPN, VKKI…FQGI, and GPKI…WFGC. Cys-282 and Cys-470 form a disulfide bridge. The N-linked (GlcNAc...) asparagine glycan is linked to Asn-285. Positions 289, 333, 381, and 430 each coordinate Ca(2+).

This sequence belongs to the peptidase M10A family. Requires Ca(2+) as cofactor. The cofactor is Zn(2+). As to expression, found in alveolar macrophages but not in peripheral blood monocytes.

It localises to the secreted. The protein resides in the extracellular space. Its subcellular location is the extracellular matrix. It catalyses the reaction Hydrolysis of soluble and insoluble elastin. Specific cleavages are also produced at 14-Ala-|-Leu-15 and 16-Tyr-|-Leu-17 in the B chain of insulin.. May be involved in tissue injury and remodeling. Has significant elastolytic activity. Can accept large and small amino acids at the P1' site, but has a preference for leucine. Aromatic or hydrophobic residues are preferred at the P1 site, with small hydrophobic residues (preferably alanine) occupying P3. This chain is Macrophage metalloelastase (MMP12), found in Homo sapiens (Human).